The primary structure comprises 415 residues: Heterogeneous nuclear ribonucleoprotein F (415 aa).

N-acetylmethionine is present on Met1. Met2 bears the N-acetylmethionine; in Heterogeneous nuclear ribonucleoprotein F, N-terminally processed mark. Positions 11–90 (YVVKLRGLPW…RYIEVFKSHR (80 aa)) constitute an RRM 1 domain. Residue Lys72 forms a Glycyl lysine isopeptide (Lys-Gly) (interchain with G-Cter in SUMO) linkage. The interval 81-86 (RYIEVF) is interaction with RNA. Lys87 participates in a covalent cross-link: Glycyl lysine isopeptide (Lys-Gly) (interchain with G-Cter in SUMO2). A phosphoserine mark is found at Ser104, Ser107, and Ser161. The RRM 2 domain occupies 111–188 (GFVRLRGLPF…RYIEVFKSSQ (78 aa)). A Glycyl lysine isopeptide (Lys-Gly) (interchain with G-Cter in SUMO2) cross-link involves residue Lys167. An interaction with RNA region spans residues 179–184 (RYIEVF). Lys185 is covalently cross-linked (Glycyl lysine isopeptide (Lys-Gly) (interchain with G-Cter in SUMO2)). Phosphoserine is present on residues Ser187, Ser193, and Ser195. Lys200 bears the N6-acetyllysine; alternate mark. Lys200 participates in a covalent cross-link: Glycyl lysine isopeptide (Lys-Gly) (interchain with G-Cter in SUMO2); alternate. Thr215 carries the post-translational modification Phosphothreonine. Lys224 carries the post-translational modification N6-acetyllysine; alternate. A Glycyl lysine isopeptide (Lys-Gly) (interchain with G-Cter in SUMO2); alternate cross-link involves residue Lys224. Ser265 carries the post-translational modification Phosphoserine. In terms of domain architecture, RRM 3 spans 289–366 (HCVHMRGLPY…IELFLNSTTG (78 aa)). The tract at residues 355–360 (RYIELF) is interaction with RNA.

As to quaternary structure, identified in the spliceosome C complex. Interacts with AGO1, AGO2, TBP and TXNL4/DIM1. Post-translationally, sumoylated.

The protein resides in the nucleus. It is found in the nucleoplasm. Functionally, component of the heterogeneous nuclear ribonucleoprotein (hnRNP) complexes which provide the substrate for the processing events that pre-mRNAs undergo before becoming functional, translatable mRNAs in the cytoplasm. Plays a role in the regulation of alternative splicing events. Binds G-rich sequences in pre-mRNAs and keeps target RNA in an unfolded state. This chain is Heterogeneous nuclear ribonucleoprotein F (Hnrnpf), found in Mus musculus (Mouse).